The chain runs to 148 residues: Flagellar assembly factor FliW (148 aa).

It belongs to the FliW family. Interacts with translational regulator CsrA and flagellin(s).

It is found in the cytoplasm. Acts as an anti-CsrA protein, binds CsrA and prevents it from repressing translation of its target genes, one of which is flagellin. Binds to flagellin and participates in the assembly of the flagellum. The chain is Flagellar assembly factor FliW from Ruminiclostridium cellulolyticum (strain ATCC 35319 / DSM 5812 / JCM 6584 / H10) (Clostridium cellulolyticum).